A 205-amino-acid polypeptide reads, in one-letter code: High frequency lysogenization protein HflD homolog (205 aa).

The protein belongs to the HflD family.

It localises to the cytoplasm. It is found in the cell inner membrane. This chain is High frequency lysogenization protein HflD homolog, found in Shewanella baltica (strain OS223).